The chain runs to 337 residues: Dihydroorotate dehydrogenase (quinone) (337 aa).

Residues 62-66 (AGLDK) and threonine 86 each bind FMN. Lysine 66 contributes to the substrate binding site. Substrate is bound at residue 111–115 (NRMGF). 2 residues coordinate FMN: asparagine 140 and asparagine 173. Asparagine 173 serves as a coordination point for substrate. Serine 176 (nucleophile) is an active-site residue. Asparagine 178 lines the substrate pocket. The FMN site is built by lysine 218 and threonine 246. 247–248 (NT) is a substrate binding site. Residues glycine 269, glycine 298, and 319–320 (YS) each bind FMN.

This sequence belongs to the dihydroorotate dehydrogenase family. Type 2 subfamily. Monomer. FMN serves as cofactor.

The protein localises to the cell membrane. It carries out the reaction (S)-dihydroorotate + a quinone = orotate + a quinol. It functions in the pathway pyrimidine metabolism; UMP biosynthesis via de novo pathway; orotate from (S)-dihydroorotate (quinone route): step 1/1. Its function is as follows. Catalyzes the conversion of dihydroorotate to orotate with quinone as electron acceptor. This Wigglesworthia glossinidia brevipalpis protein is Dihydroorotate dehydrogenase (quinone).